The primary structure comprises 642 residues: Zinc finger protein 14 (642 aa).

One can recognise a KRAB domain in the interval 4–76 (VSFEDVAVNF…MVERLCESRK (73 aa)). The C2H2-type 1 zinc finger occupies 103-125 (HECSFCGRDFMHHSSLNRHMRSH). A C2H2-type 2; degenerate zinc finger spans residues 141-163 (RKHKAVEKTFSYHHCFRKHERTH). Residues 169–191 (YECKQCGKAFIYYQPFQRHERTH) form a C2H2-type 3 zinc finger. The C2H2-type 4; atypical zinc-finger motif lies at 197-217 (YECKQCGKTFIYYQSFQQHAH). 15 consecutive C2H2-type zinc fingers follow at residues 223–245 (YECK…ERTH), 251–273 (YECK…ERTH), 279–301 (YKCK…KRTH), 307–329 (YECK…VITH), 335–357 (YKCK…ERTH), 363–385 (YECK…ERTH), 391–413 (YECK…ETTH), 419–441 (YECK…ERTH), 447–469 (YECK…ERSH), 475–497 (YECK…ERTH), 503–525 (YECK…EKIH), 531–553 (FECK…ERTH), 559–581 (YQCK…ERTH), 587–609 (YRCK…ERSH), and 615–637 (YECK…ERTH).

This sequence belongs to the krueppel C2H2-type zinc-finger protein family.

The protein localises to the nucleus. Its function is as follows. May be involved in transcriptional regulation. The polypeptide is Zinc finger protein 14 (ZNF14) (Pongo abelii (Sumatran orangutan)).